A 220-amino-acid polypeptide reads, in one-letter code: Phosphopantothenoylcysteine decarboxylase (220 aa).

FMN is bound by residues 29-31 (GSV) and 54-56 (TKA). H91 acts as the Proton donor in catalysis. Residues 107-110 (SANT) and A141 contribute to the FMN site. N-[(R)-4-phosphopantothenoyl]-L-cysteine contacts are provided by N143, R173, and A175. The active-site Proton donor is the C176. N-[(R)-4-phosphopantothenoyl]-L-cysteine is bound at residue M184.

Belongs to the HFCD (homooligomeric flavin containing Cys decarboxylase) superfamily. As to quaternary structure, forms homotrimers. Interacts with HIP1. Interacts with HD1 in the dark. It depends on FMN as a cofactor. As to expression, expressed in root meristem, shoot apical meristem (SAM), intercalary meristem, floral meristem, embryo and tip of the coleoptile before true leaf emergence.

The protein resides in the nucleus. The catalysed reaction is N-[(R)-4-phosphopantothenoyl]-L-cysteine + H(+) = (R)-4'-phosphopantetheine + CO2. The protein operates within cofactor biosynthesis; coenzyme A biosynthesis; CoA from (R)-pantothenate: step 3/5. Functionally, catalyzes the decarboxylation of 4'-phosphopantothenoylcysteine to 4'-phosphopantetheine, a key step in coenzyme A biosynthesis. Involved in salt and osmotic tolerance, and light-regulated plant growth. Trimerization of HAL3 recruits and activates the E3 ubiquitin-protein ligase HIP1, which leads to the degradation of cell cycle suppressors, resulting in enhancement of cell division and plant growth. HAL3 function in cell division seems to be independent from its PPC decarboxylase activity. Acts as a positive regulator of flowering by binding to HD1 in the dark. This chain is Phosphopantothenoylcysteine decarboxylase, found in Oryza sativa subsp. japonica (Rice).